A 204-amino-acid chain; its full sequence is Probable nicotinate-nucleotide adenylyltransferase (204 aa).

This sequence belongs to the NadD family.

The enzyme catalyses nicotinate beta-D-ribonucleotide + ATP + H(+) = deamido-NAD(+) + diphosphate. The protein operates within cofactor biosynthesis; NAD(+) biosynthesis; deamido-NAD(+) from nicotinate D-ribonucleotide: step 1/1. Catalyzes the reversible adenylation of nicotinate mononucleotide (NaMN) to nicotinic acid adenine dinucleotide (NaAD). This Methylacidiphilum infernorum (isolate V4) (Methylokorus infernorum (strain V4)) protein is Probable nicotinate-nucleotide adenylyltransferase.